The following is a 1196-amino-acid chain: Nucleolar protein 6 (1196 aa).

Disordered regions lie at residues 1 to 74 and 1140 to 1196; these read MPGK…NVKP and KREQ…KALK. 2 stretches are compositionally biased toward basic and acidic residues: residues 22–31 and 65–74; these read HAEDHSDLEH and HRGDTKNVKP. Over residues 1165-1187 the composition is skewed to basic residues; sequence KPKKHGKRKGTGKAAPPKKKRLI.

Belongs to the NRAP family. As to quaternary structure, part of the small subunit (SSU) processome, composed of more than 70 proteins and the RNA chaperone small nucleolar RNA (snoRNA) U3.

The protein localises to the nucleus. The protein resides in the nucleolus. It localises to the chromosome. Its function is as follows. Part of the small subunit (SSU) processome, first precursor of the small eukaryotic ribosomal subunit. During the assembly of the SSU processome in the nucleolus, many ribosome biogenesis factors, an RNA chaperone and ribosomal proteins associate with the nascent pre-rRNA and work in concert to generate RNA folding, modifications, rearrangements and cleavage as well as targeted degradation of pre-ribosomal RNA by the RNA exosome. The chain is Nucleolar protein 6 from Drosophila simulans (Fruit fly).